Reading from the N-terminus, the 94-residue chain is Protein S100-A1 (94 aa).

EF-hand domains lie at 13–48 (INVF…FLDA) and 50–85 (KDVD…LTVA). Ca(2+) is bound by residues K28, E33, D63, N65, D67, E69, and E74. Position 86 is an S-nitrosocysteine (C86).

Belongs to the S-100 family. As to quaternary structure, dimer of either two alpha chains, or two beta chains, or one alpha and one beta chain. Also forms heterodimers with S100P. Interacts with AGER. Interacts with CAPZA1. Interacts with FKBP4. Interacts with RYR1 and RYR2. Interacts with CACYBP in a calcium-dependent manner. Interacts with PPP5C (via TPR repeats); the interaction is calcium-dependent and modulates PPP5C activity. Interacts with ATP2A2 and PLN in a Ca(2+)-dependent manner. Interacts with mitochondrial F1-ATPase subunits ATP5F1A and ATP5F1B; these interactions increase F1-ATPase activity. Post-translationally, glutathionylated; glutathionylation increases affinity to calcium about 10-fold. Highly prevalent in heart. Also found in lesser quantities in skeletal muscle and brain.

The protein localises to the cytoplasm. The protein resides in the sarcoplasmic reticulum. It localises to the mitochondrion. Small calcium binding protein that plays important roles in several biological processes such as Ca(2+) homeostasis, chondrocyte biology and cardiomyocyte regulation. In response to an increase in intracellular Ca(2+) levels, binds calcium which triggers conformational changes. These changes allow interactions with specific target proteins and modulate their activity. Regulates a network in cardiomyocytes controlling sarcoplasmic reticulum Ca(2+) cycling and mitochondrial function through interaction with the ryanodine receptors RYR1 and RYR2, sarcoplasmic reticulum Ca(2+)-ATPase/ATP2A2 and mitochondrial F1-ATPase. Facilitates diastolic Ca(2+) dissociation and myofilament mechanics in order to improve relaxation during diastole. This is Protein S100-A1 (S100A1) from Homo sapiens (Human).